The sequence spans 50 residues: Large ribosomal subunit protein eL39 (50 aa).

This sequence belongs to the eukaryotic ribosomal protein eL39 family.

This is Large ribosomal subunit protein eL39 from Methanoculleus marisnigri (strain ATCC 35101 / DSM 1498 / JR1).